We begin with the raw amino-acid sequence, 1009 residues long: Putative receptor-like protein 8 (1009 aa).

The first 22 residues, 1 to 22 (MKTNFVILLLLLCVFAISPSQQ), serve as a signal peptide directing secretion. The Extracellular segment spans residues 23-961 (EEINQHNPGI…EEDDEAPVDM (939 aa)). N-linked (GlcNAc...) asparagine glycosylation is found at asparagine 159 and asparagine 197. The LRR 1; degenerate repeat unit spans residues 204-231 (FEEVRSLELSAGLNGFVDNVEGYKSLRK). LRR repeat units follow at residues 232–255 (LKNL…PFIN), 257–281 (ATSL…EIKD), 282–305 (LTNL…LTHL), 306–329 (KKLK…VVCE), 331–354 (KNLW…LGRL), 355–377 (NKLR…TFNR), 379–402 (ESLE…PLAN), 404–427 (TKLK…SEPK), 442–465 (LEKI…ATIV), 466–490 (HELQ…GYAL), 492–514 (NLLR…MGEM), 515–538 (VNIT…FVTG), 540–565 (FSLK…SFTS), 567–587 (EELR…LLSS), 588–612 (NTTL…MSNL), 613–636 (SGLT…LLAI), 638–660 (FLSL…VGGE), 662–681 (GIKL…DTLL), 682–705 (EKVQ…VNTE), 707–728 (IYIL…LCDL), 729–752 (RNIR…LYNL), 819–842 (LDYM…ELGS), 843–866 (LSKL…SFSN), 867–891 (LKDI…LTNL), and 893–916 (SLVV…QFNT). N-linked (GlcNAc...) asparagine glycosylation is present at asparagine 267. 2 N-linked (GlcNAc...) asparagine glycosylation sites follow: asparagine 390 and asparagine 402. Residues asparagine 497, asparagine 516, asparagine 526, and asparagine 551 are each glycosylated (N-linked (GlcNAc...) asparagine). N-linked (GlcNAc...) asparagine glycosylation is found at asparagine 588 and asparagine 611. 2 N-linked (GlcNAc...) asparagine glycosylation sites follow: asparagine 716 and asparagine 751. N-linked (GlcNAc...) asparagine glycans are attached at residues asparagine 850, asparagine 890, asparagine 903, and asparagine 934. Positions 934–955 (NRSCDAKKTSDESENGGEEEDD) are disordered. The span at 945-955 (ESENGGEEEDD) shows a compositional bias: acidic residues. A helical transmembrane segment spans residues 962 to 982 (LAFYFSSASTYVTTLIGIFIL). Residues 983–1009 (MCFDCPLRRAWLRIVDASIASVKSMLP) are Cytoplasmic-facing.

This sequence belongs to the RLP family.

It localises to the cell membrane. In Arabidopsis thaliana (Mouse-ear cress), this protein is Putative receptor-like protein 8.